The chain runs to 31 residues: Dermaseptin-7.2TR (31 aa).

Position 31 is a glutamic acid 1-amide (glutamate 31).

As to expression, expressed by the skin glands.

The protein localises to the secreted. Has antimicrobial activity. This chain is Dermaseptin-7.2TR, found in Phyllomedusa trinitatis (Trinidad leaf frog).